The sequence spans 1422 residues: YEATS domain-containing protein 2 (1422 aa).

Lys9 participates in a covalent cross-link: Glycyl lysine isopeptide (Lys-Gly) (interchain with G-Cter in SUMO2). Residues 47 to 80 adopt a coiled-coil conformation; the sequence is KEQFALEMKNKEHEIEVIDQRLIEARRMMDKLRA. Lys113 participates in a covalent cross-link: Glycyl lysine isopeptide (Lys-Gly) (interchain with G-Cter in SUMO2). Positions 117-198 are disordered; the sequence is ESPSRSSSPA…KTEQRNADLT (82 aa). Phosphoserine is present on residues Ser118, Ser120, and Ser157. Residues 119–148 are compositionally biased toward polar residues; the sequence is PSRSSSPANQRAETPSANHSESDSLSQHND. Over residues 149–165 the composition is skewed to basic and acidic residues; that stretch reads FLSDKDNNSNMDIEERL. Residues 166 to 176 are compositionally biased toward polar residues; it reads SNNMEQRPSRN. Residues 177 to 198 show a composition bias toward basic and acidic residues; the sequence is TGRDTSRITGSHKTEQRNADLT. Residue Lys189 forms a Glycyl lysine isopeptide (Lys-Gly) (interchain with G-Cter in SUMO2) linkage. The YEATS domain occupies 200-345; sequence ETSRLFVKKT…EDCIYPQSSE (146 aa). Histone H3K27cr binding regions lie at residues 259–261 and 282–284; these read HPS and WGE. Lys370 participates in a covalent cross-link: Glycyl lysine isopeptide (Lys-Gly) (interchain with G-Cter in SUMO2). Residue Thr407 is modified to Phosphothreonine. Residues Ser447, Ser463, Ser465, Ser471, and Ser473 each carry the phosphoserine modification. The segment at 465-486 is disordered; it reads SPISTPSPSPLPRTPTSTPVHV. At Thr478 the chain carries Phosphothreonine. Lys487 is covalently cross-linked (Glycyl lysine isopeptide (Lys-Gly) (interchain with G-Cter in SUMO2)). Polar residues predominate over residues 513–535; that stretch reads TTPSTGSPTNKISTASQVSQGTG. The segment at 513 to 540 is disordered; sequence TTPSTGSPTNKISTASQVSQGTGSPVPK. At Ser536 the chain carries Phosphoserine. Lys552 participates in a covalent cross-link: Glycyl lysine isopeptide (Lys-Gly) (interchain with G-Cter in SUMO2). Ser575 is modified (phosphoserine). Lys592 is covalently cross-linked (Glycyl lysine isopeptide (Lys-Gly) (interchain with G-Cter in SUMO2)). Ser627 is modified (phosphoserine). Residues Lys649 and Lys773 each participate in a glycyl lysine isopeptide (Lys-Gly) (interchain with G-Cter in SUMO2) cross-link. The interval 794 to 842 is disordered; the sequence is GSAASGGSGAGGGGGGGGGGGSGSGGGGSTGGGGGTAGGGTQSTAGPGG. Over residues 797–842 the composition is skewed to gly residues; sequence ASGGSGAGGGGGGGGGGGSGSGGGGSTGGGGGTAGGGTQSTAGPGG. Lys923 participates in a covalent cross-link: Glycyl lysine isopeptide (Lys-Gly) (interchain with G-Cter in SUMO2). Lys1110 participates in a covalent cross-link: Glycyl lysine isopeptide (Lys-Gly) (interchain with G-Cter in SUMO1); alternate. Lys1110 participates in a covalent cross-link: Glycyl lysine isopeptide (Lys-Gly) (interchain with G-Cter in SUMO2); alternate. Lys1130 participates in a covalent cross-link: Glycyl lysine isopeptide (Lys-Gly) (interchain with G-Cter in SUMO2). At Thr1219 the chain carries Phosphothreonine. Residues Lys1222 and Lys1285 each participate in a glycyl lysine isopeptide (Lys-Gly) (interchain with G-Cter in SUMO2) cross-link.

In terms of assembly, component of the ADA2A-containing complex (ATAC), composed of KAT14, KAT2A, TADA2L, TADA3L, ZZ3, MBIP, WDR5, YEATS2, SGF29 and DR1.

Its subcellular location is the nucleus. Its function is as follows. Chromatin reader component of the ATAC complex, a complex with histone acetyltransferase activity on histones H3 and H4. YEATS2 specifically recognizes and binds histone H3 crotonylated at 'Lys-27' (H3K27cr). Crotonylation marks active promoters and enhancers and confers resistance to transcriptional repressors. This Homo sapiens (Human) protein is YEATS domain-containing protein 2.